The sequence spans 952 residues: Meiotic coiled-coil protein 3 (952 aa).

3 coiled-coil regions span residues 283 to 611, 684 to 716, and 839 to 942; these read QLLQ…KEHL, TKKF…EDKL, and SLEN…RERE.

The protein resides in the cytoplasm. Its function is as follows. Has a role in meiosis. This chain is Meiotic coiled-coil protein 3 (mcp3), found in Schizosaccharomyces pombe (strain 972 / ATCC 24843) (Fission yeast).